The sequence spans 173 residues: Large ribosomal subunit protein uL5 (173 aa).

The protein belongs to the universal ribosomal protein uL5 family. In terms of assembly, component of the large ribosomal subunit.

Its subcellular location is the nucleus. It is found in the cytoplasm. Functionally, component of the ribosome, a large ribonucleoprotein complex responsible for the synthesis of proteins in the cell. The small ribosomal subunit (SSU) binds messenger RNAs (mRNAs) and translates the encoded message by selecting cognate aminoacyl-transfer RNA (tRNA) molecules. The large subunit (LSU) contains the ribosomal catalytic site termed the peptidyl transferase center (PTC), which catalyzes the formation of peptide bonds, thereby polymerizing the amino acids delivered by tRNAs into a polypeptide chain. The nascent polypeptides leave the ribosome through a tunnel in the LSU and interact with protein factors that function in enzymatic processing, targeting, and the membrane insertion of nascent chains at the exit of the ribosomal tunnel. This is Large ribosomal subunit protein uL5 (RPL11) from Encephalitozoon cuniculi (strain GB-M1) (Microsporidian parasite).